A 454-amino-acid polypeptide reads, in one-letter code: Asparagine--tRNA ligase (454 aa).

The protein belongs to the class-II aminoacyl-tRNA synthetase family. As to quaternary structure, homodimer.

Its subcellular location is the cytoplasm. The catalysed reaction is tRNA(Asn) + L-asparagine + ATP = L-asparaginyl-tRNA(Asn) + AMP + diphosphate + H(+). This Mycoplasma capricolum subsp. capricolum (strain California kid / ATCC 27343 / NCTC 10154) protein is Asparagine--tRNA ligase.